The following is a 438-amino-acid chain: Xaa-Pro dipeptidase 2 (438 aa).

Mn(2+)-binding residues include aspartate 242, aspartate 253, histidine 333, glutamate 378, and glutamate 414.

It belongs to the peptidase M24B family. Bacterial-type prolidase subfamily. Mn(2+) serves as cofactor.

The catalysed reaction is Xaa-L-Pro dipeptide + H2O = an L-alpha-amino acid + L-proline. In terms of biological role, splits dipeptides with a prolyl residue in the C-terminal position. This is Xaa-Pro dipeptidase 2 from Idiomarina loihiensis (strain ATCC BAA-735 / DSM 15497 / L2-TR).